Here is a 369-residue protein sequence, read N- to C-terminus: Deoxyhypusine synthase (369 aa).

Residues 105 to 109, 131 to 133, E137, and D238 contribute to the NAD(+) site; these read SNLIS and TAG. Residue 136-137 participates in spermidine binding; sequence EE. D243 contacts spermidine. NAD(+) is bound at residue G283. H288 provides a ligand contact to spermidine. Position 308–309 (308–309) interacts with NAD(+); sequence TA. Spermidine contacts are provided by residues 314 to 316 and 323 to 329; these read GSD and EAVSWGK. Residue K329 is the Nucleophile of the active site. Residue 342–343 participates in NAD(+) binding; that stretch reads DA.

This sequence belongs to the deoxyhypusine synthase family. The cofactor is NAD(+).

The enzyme catalyses [eIF5A protein]-L-lysine + spermidine = [eIF5A protein]-deoxyhypusine + propane-1,3-diamine. Its pathway is protein modification; eIF5A hypusination. Its function is as follows. Catalyzes the NAD-dependent oxidative cleavage of spermidine and the subsequent transfer of the butylamine moiety of spermidine to the epsilon-amino group of a critical lysine residue of the eIF-5A precursor protein to form the intermediate deoxyhypusine residue. This is the first step of the post-translational modification of that lysine into an unusual amino acid residue named hypusine. Hypusination is unique to mature eIF-5A factor and is essential for its function. This is Deoxyhypusine synthase (Dhps) from Rattus norvegicus (Rat).